Consider the following 843-residue polypeptide: Protein P (843 aa).

The interval 1-177 (MPLSYQHFRK…FCGSPYSWEQ (177 aa)) is terminal protein domain (TP). The segment at 178 to 346 (DLQHGRLVIQ…YCLCHIVNLI (169 aa)) is spacer. Disordered regions lie at residues 219–258 (RKSR…VGVE) and 297–316 (SSGH…RSQS). The interval 347-690 (DDWGPCAEHG…YLNLYPVARQ (344 aa)) is polymerase/reverse transcriptase domain (RT). One can recognise a Reverse transcriptase domain in the interval 357–600 (EHRIRTPRTP…YSLNFMGYVI (244 aa)). Residues D429, D551, and D552 each contribute to the Mg(2+) site.

It belongs to the hepadnaviridae P protein family.

The enzyme catalyses DNA(n) + a 2'-deoxyribonucleoside 5'-triphosphate = DNA(n+1) + diphosphate. The catalysed reaction is Endonucleolytic cleavage to 5'-phosphomonoester.. Its activity is regulated as follows. Activated by host HSP70 and HSP40 in vitro to be able to bind the epsilon loop of the pgRNA. Because deletion of the RNase H region renders the protein partly chaperone-independent, the chaperones may be needed indirectly to relieve occlusion of the RNA-binding site by this domain. Inhibited by several reverse-transcriptase inhibitors: Lamivudine, Adefovir and Entecavir. Its function is as follows. Multifunctional enzyme that converts the viral RNA genome into dsDNA in viral cytoplasmic capsids. This enzyme displays a DNA polymerase activity that can copy either DNA or RNA templates, and a ribonuclease H (RNase H) activity that cleaves the RNA strand of RNA-DNA heteroduplexes in a partially processive 3'- to 5'-endonucleasic mode. Neo-synthesized pregenomic RNA (pgRNA) are encapsidated together with the P protein, and reverse-transcribed inside the nucleocapsid. Initiation of reverse-transcription occurs first by binding the epsilon loop on the pgRNA genome, and is initiated by protein priming, thereby the 5'-end of (-)DNA is covalently linked to P protein. Partial (+)DNA is synthesized from the (-)DNA template and generates the relaxed circular DNA (RC-DNA) genome. After budding and infection, the RC-DNA migrates in the nucleus, and is converted into a plasmid-like covalently closed circular DNA (cccDNA). The activity of P protein does not seem to be necessary for cccDNA generation, and is presumably released from (+)DNA by host nuclear DNA repair machinery. The polypeptide is Protein P (Hepatitis B virus genotype B1 (isolate Japan/Ry30/2002) (HBV-B)).